We begin with the raw amino-acid sequence, 501 residues long: Solute carrier family 2, facilitated glucose transporter member 5 (501 aa).

Met1 is subject to N-acetylmethionine. At 1–18 the chain is on the cytoplasmic side; sequence MEPQDPVKREGRLTPVIV. Residues 19 to 39 traverse the membrane as a helical segment; the sequence is LATLIAAFGSSFQYGYNVAAI. Tyr32 serves as a coordination point for D-fructose. Residues 40 to 68 lie on the Extracellular side of the membrane; it reads NSPSEFMKDFYNYTYYDRVGEYMNEFYLT. N-linked (GlcNAc...) asparagine glycosylation occurs at Asn51. The helical transmembrane segment at 69–91 threads the bilayer; that stretch reads LLWSVTVSMFPFGGFLGSLMVGP. The Cytoplasmic portion of the chain corresponds to 92–98; the sequence is LVNNLGR. A helical membrane pass occupies residues 99 to 119; that stretch reads KGTLLFNNIFSIVPALLMGFS. Over 120–126 the chain is Extracellular; it reads ELAKSFE. A helical membrane pass occupies residues 127–149; sequence MIIVARVLVGICAGLSSNVVPMY. The Cytoplasmic segment spans residues 150 to 161; it reads LGELAPKNWRGA. A helical transmembrane segment spans residues 162–182; sequence LGVVPQLFITIGILVAQIFGL. Position 167 (Gln167) interacts with D-fructose. Over 183–192 the chain is Extracellular; it reads RSLLANEEGW. A helical transmembrane segment spans residues 193–213; the sequence is PILLGLTGIPAVLQLLFLPFF. Residues 214-277 lie on the Cytoplasmic side of the membrane; that stretch reads PESPRYLLIQ…LFKMRSLRWQ (64 aa). Residues 278 to 298 form a helical membrane-spanning segment; that stretch reads VISIIVLMAGQQLSGVNAIYY. D-fructose contacts are provided by residues Gln288 and 296-298; that span reads IYY. Residues 299–313 are Extracellular-facing; the sequence is YADQIYLSAGVNEDD. The helical transmembrane segment at 314 to 334 threads the bilayer; it reads VQYVTAGTGAVNVLITVCAIF. At 335-342 the chain is on the cytoplasmic side; it reads VVELMGRR. The helical transmembrane segment at 343 to 363 threads the bilayer; it reads FLLLLGFSVCFTACCVLTGAL. Residues 364–371 lie on the Extracellular side of the membrane; that stretch reads ALQDVISW. A helical transmembrane segment spans residues 372 to 394; the sequence is MPYVSIACVISYVIGHALGPSPI. A D-fructose-binding site is contributed by His387. Over 395–412 the chain is Cytoplasmic; the sequence is PALLVTEIFLQSSRPAAY. Residues 413 to 433 traverse the membrane as a helical segment; sequence MVAGTVHWLSNFTVGLVFPFI. D-fructose is bound at residue 419–420; the sequence is HW. Residues 434 to 439 lie on the Extracellular side of the membrane; the sequence is QVGLGA. The chain crosses the membrane as a helical span at residues 440 to 460; the sequence is YSFVIFAVICLLTTVYIFLII. Residues 461-501 lie on the Cytoplasmic side of the membrane; it reads PETKSKTFIEINRIFIKMNKVPGVHPEKEELKEFPPSTARQ.

The protein belongs to the major facilitator superfamily. Sugar transporter (TC 2.A.1.1) family. Glucose transporter subfamily.

It is found in the apical cell membrane. The protein resides in the cell membrane. The protein localises to the sarcolemma. It carries out the reaction D-fructose(out) = D-fructose(in). Functionally, functions as a fructose transporter that has only low activity with other monosaccharides. Can mediate the uptake of deoxyglucose, but with low efficiency. Essential for fructose uptake in the small intestine. Plays a role in the regulation of salt uptake and blood pressure in response to dietary fructose. Required for the development of high blood pressure in response to high dietary fructose intake. This Bos taurus (Bovine) protein is Solute carrier family 2, facilitated glucose transporter member 5.